A 124-amino-acid polypeptide reads, in one-letter code: uncharacterized protein (124 aa).

This is an uncharacterized protein from Bacillus subtilis (strain 168).